The following is a 405-amino-acid chain: MDIQKQIEIIRRGTVDLISEEELKSKLQKKKTLKIKAGFDPTAPDLHLGHFVQLKKLKHFQDLGHEVSFLLGDFTAMIGDPTGKSETRKRLSREEVLENSKTYQNQVFKVLDPVKTKIVYNSNWCSKMNFEDVLVLSSKYNVARMLERDDFSKRYKAGQPISMIEFLYPLVQGYDSVAMECDVELGGTDQKFNLLVGRDLQREYGKEAQCVLTLPLLVGLDGSKKMSKSLGNYVGITETPIDMFGKLMSISDDLMWNYFELLTDLPLPEIENRKNGMAKKELHPKEIKTELAKLIMDQFSSPSENEEAIQEWKKIHNPKSRAVPDDVKEIKLGEEFFAETPEPLLVWVLSKLSFIPSVSEGRRLIKAGGLYLSEDKITDEKFPIQKGKEYLVRQGKKGKFLKIIS.

Residues 41-50 carry the 'HIGH' region motif; the sequence is PTAPDLHLGH. The short motif at 225 to 229 is the 'KMSKS' region element; that stretch reads KMSKS. Residue K228 participates in ATP binding. The S4 RNA-binding domain occupies 342 to 404; the sequence is EPLLVWVLSK…GKKGKFLKII (63 aa).

It belongs to the class-I aminoacyl-tRNA synthetase family. TyrS type 2 subfamily. Homodimer.

Its subcellular location is the cytoplasm. It catalyses the reaction tRNA(Tyr) + L-tyrosine + ATP = L-tyrosyl-tRNA(Tyr) + AMP + diphosphate + H(+). Its function is as follows. Catalyzes the attachment of tyrosine to tRNA(Tyr) in a two-step reaction: tyrosine is first activated by ATP to form Tyr-AMP and then transferred to the acceptor end of tRNA(Tyr). The sequence is that of Tyrosine--tRNA ligase from Leptospira interrogans serogroup Icterohaemorrhagiae serovar Lai (strain 56601).